The following is a 357-amino-acid chain: Phosphoserine aminotransferase (357 aa).

Residue Arg-41 participates in L-glutamate binding. Residues 76 to 77 (GT), Trp-102, Thr-152, Asp-171, and Gln-194 each bind pyridoxal 5'-phosphate. At Lys-195 the chain carries N6-(pyridoxal phosphate)lysine. 235-236 (NT) serves as a coordination point for pyridoxal 5'-phosphate.

It belongs to the class-V pyridoxal-phosphate-dependent aminotransferase family. SerC subfamily. As to quaternary structure, homodimer. The cofactor is pyridoxal 5'-phosphate.

Its subcellular location is the cytoplasm. It carries out the reaction O-phospho-L-serine + 2-oxoglutarate = 3-phosphooxypyruvate + L-glutamate. The catalysed reaction is 4-(phosphooxy)-L-threonine + 2-oxoglutarate = (R)-3-hydroxy-2-oxo-4-phosphooxybutanoate + L-glutamate. Its pathway is amino-acid biosynthesis; L-serine biosynthesis; L-serine from 3-phospho-D-glycerate: step 2/3. Functionally, catalyzes the reversible conversion of 3-phosphohydroxypyruvate to phosphoserine and of 3-hydroxy-2-oxo-4-phosphonooxybutanoate to phosphohydroxythreonine. This Limosilactobacillus fermentum (strain NBRC 3956 / LMG 18251) (Lactobacillus fermentum) protein is Phosphoserine aminotransferase.